Reading from the N-terminus, the 269-residue chain is uncharacterized protein (269 aa).

A disordered region spans residues M1–L21.

This is an uncharacterized protein from Homo sapiens (Human).